Reading from the N-terminus, the 304-residue chain is Protoheme IX farnesyltransferase (304 aa).

9 helical membrane-spanning segments follow: residues 31–51 (VNTLIVFCAVIGMFLAVPDGL), 58–78 (VAATLGIAFVAGAAAAMNCLI), 99–119 (LAPAETLLFAGVLGGTGLTVL), 126–146 (LTMWLTLATFVGYAVVYTVLL), 154–174 (IVIGGASGAMPPVLGWAAVTG), 180–200 (ALLLFLIIFAWTPPHFWALAL), 222–242 (FTRLSVLLYTCILFGVTLLPF), 243–263 (ATRMSGPLYLVCAVALGIGFL), and 284–304 (FSILYLFLLFAALLMDHYLPL).

Belongs to the UbiA prenyltransferase family. Protoheme IX farnesyltransferase subfamily.

The protein localises to the cell inner membrane. The catalysed reaction is heme b + (2E,6E)-farnesyl diphosphate + H2O = Fe(II)-heme o + diphosphate. Its pathway is porphyrin-containing compound metabolism; heme O biosynthesis; heme O from protoheme: step 1/1. Its function is as follows. Converts heme B (protoheme IX) to heme O by substitution of the vinyl group on carbon 2 of heme B porphyrin ring with a hydroxyethyl farnesyl side group. In Aromatoleum aromaticum (strain DSM 19018 / LMG 30748 / EbN1) (Azoarcus sp. (strain EbN1)), this protein is Protoheme IX farnesyltransferase.